Consider the following 295-residue polypeptide: GTPase Era (295 aa).

The region spanning 7-176 is the Era-type G domain; the sequence is KTVSVCIIGR…ITSKAKIAPW (170 aa). The tract at residues 15 to 22 is G1; that stretch reads GRPNSGKS. 15 to 22 provides a ligand contact to GTP; sequence GRPNSGKS. Residues 41-45 are G2; that stretch reads QTTRS. Positions 62–65 are G3; that stretch reads DTPG. GTP-binding positions include 62 to 66 and 124 to 127; these read DTPGI and NKID. The tract at residues 124–127 is G4; sequence NKID. The interval 152 to 154 is G5; it reads ISA. In terms of domain architecture, KH type-2 spans 204 to 281; it reads LQQELPYKLT…HLFLFVKVQE (78 aa).

It belongs to the TRAFAC class TrmE-Era-EngA-EngB-Septin-like GTPase superfamily. Era GTPase family. As to quaternary structure, monomer.

Its subcellular location is the cytoplasm. The protein resides in the cell inner membrane. In terms of biological role, an essential GTPase that binds both GDP and GTP, with rapid nucleotide exchange. Plays a role in 16S rRNA processing and 30S ribosomal subunit biogenesis and possibly also in cell cycle regulation and energy metabolism. The chain is GTPase Era from Rickettsia bellii (strain RML369-C).